We begin with the raw amino-acid sequence, 86 residues long: MSVKIRLARGGAKKKPFYQVVVADERFPRDGRFIEQLGQYDPRQNPSMVTLKEDKTLEWLNKGAQPTDTVRRLLRTQGVWAKFKQA.

This sequence belongs to the bacterial ribosomal protein bS16 family.

The sequence is that of Small ribosomal subunit protein bS16 from Syntrophotalea carbinolica (strain DSM 2380 / NBRC 103641 / GraBd1) (Pelobacter carbinolicus).